We begin with the raw amino-acid sequence, 219 residues long: Cysteine dioxygenase (219 aa).

3 residues coordinate Fe cation: histidine 106, histidine 108, and histidine 166. The segment at residues 113–183 (CVMKILHGSL…NDFAISLHLY (71 aa)) is a cross-link (3'-(S-cysteinyl)-tyrosine (Cys-Tyr)).

It belongs to the cysteine dioxygenase family. Fe cation is required as a cofactor. In terms of processing, the thioether cross-link between Cys-113 and Tyr-183 plays a structural role through stabilizing the Fe(2+) ion, and prevents the production of highly damaging free hydroxyl radicals by holding the oxygen radical via hydroxyl hydrogen.

The enzyme catalyses L-cysteine + O2 = 3-sulfino-L-alanine + H(+). In terms of biological role, cysteine dioxygenase involved in sulfite formation from cysteine. Required for keratin degradation and plays an important role in filamentous growth and virulence. This is Cysteine dioxygenase from Arthroderma benhamiae (Trichophyton mentagrophytes).